We begin with the raw amino-acid sequence, 436 residues long: Histidinol dehydrogenase (436 aa).

Residues S242, Q264, and H267 each contribute to the substrate site. Zn(2+)-binding residues include Q264 and H267. Active-site proton acceptor residues include E332 and H333. Residues H333, D366, E420, and H425 each coordinate substrate. Residue D366 participates in Zn(2+) binding. Position 425 (H425) interacts with Zn(2+).

Belongs to the histidinol dehydrogenase family. Zn(2+) serves as cofactor.

It catalyses the reaction L-histidinol + 2 NAD(+) + H2O = L-histidine + 2 NADH + 3 H(+). The protein operates within amino-acid biosynthesis; L-histidine biosynthesis; L-histidine from 5-phospho-alpha-D-ribose 1-diphosphate: step 9/9. Catalyzes the sequential NAD-dependent oxidations of L-histidinol to L-histidinaldehyde and then to L-histidine. This is Histidinol dehydrogenase from Nitratidesulfovibrio vulgaris (strain ATCC 29579 / DSM 644 / CCUG 34227 / NCIMB 8303 / VKM B-1760 / Hildenborough) (Desulfovibrio vulgaris).